A 3122-amino-acid chain; its full sequence is DNA polymerase zeta catalytic subunit (3122 aa).

5 disordered regions span residues 270-289 (QRRRNRNESSQISQPESQDC), 425-457 (GYQGEKNRMPLPCHSFGESQNPQNSDDEENEPQ), 487-509 (LCRNAHRSSTEEDDSSSEEEMEW), 524-545 (LDGTADENSDNPLNNENSRAHS), and 842-886 (TSTK…TFEN). Over residues 277-286 (ESSQISQPES) the composition is skewed to polar residues. Positions 497 to 509 (EEDDSSSEEEMEW) are enriched in acidic residues. Composition is skewed to polar residues over residues 533–545 (DNPLNNENSRAHS) and 842–860 (TSTKSTETGATKDSCTHND). S1029 carries the post-translational modification Phosphoserine. 7 disordered regions span residues 1034–1075 (YPIY…TLSF), 1154–1285 (VYNT…PTGI), 1429–1453 (VSVSEQSKTSETCSPGNAASEESQT), 1538–1616 (KAQS…LSDD), 1842–1869 (NDVLTPTPDSSPRSTSSPLQSKNGSFTP), 1959–1979 (NPRPGSPLRNGQAVVNKESSN), and 2091–2138 (AAVP…RHSS). Residue T1040 is modified to Phosphothreonine. Basic residues-rich tracts occupy residues 1042 to 1063 (KKSHRRKSKHKSAKKKPGKQHR) and 1166 to 1179 (KASRARAQVKKSKA). Positions 1215–1239 (RANEKSLSRKHAIPADEKMKPHSEA) are enriched in basic and acidic residues. The span at 1243-1270 (PNHQSVSELTSSSGAQALSKQKEMSQTG) shows a compositional bias: polar residues. A compositionally biased stretch (low complexity) spans 1429–1440 (VSVSEQSKTSET). Polar residues-rich tracts occupy residues 1441 to 1453 (CSPGNAASEESQT) and 1538 to 1561 (KAQSTNVVQDSTSTHQPDKNISVS). Residues 1566–1587 (KANKRTRPVTSPRKPRTPRRTK) are compositionally biased toward basic residues. A compositionally biased stretch (basic and acidic residues) spans 1588–1598 (PKEQTPRRLKV). Positions 1602-1615 (NLQTSGHLDNSLSD) are enriched in polar residues. Residues 1844-1895 (VLTPTPDSSPRSTSSPLQSKNGSFTPRTAHILKPLMSPPSREEIVATLLDHD) form a mediates interaction with MAD2L2 region. Over residues 1846 to 1859 (TPTPDSSPRSTSSP) the composition is skewed to low complexity. Over residues 1860-1869 (LQSKNGSFTP) the composition is skewed to polar residues. S1964 carries the post-translational modification Phosphoserine. Positions 3034, 3037, 3046, and 3049 each coordinate Zn(2+). The segment at 3034-3049 (CPVCDDLTQHGICSKC) adopts a CysA-type zinc-finger fold. [4Fe-4S] cluster contacts are provided by C3078, C3081, C3091, and C3096. The CysB motif signature appears at 3078-3096 (CRNCTGSFDRHIPCVSLNC).

The protein belongs to the DNA polymerase type-B family. In terms of assembly, heterodimer with MAD2L2. This dimer forms the minimal DNA polymerase zeta complex (Pol-zeta2), with REV3L bearing DNA polymerase catalytic activity, although its activity is very low in this context. Component of the tetrameric Pol-zeta complex (Pol-zeta4), which consists of REV3L, MAD2L2, POLD2 and POLD3; Pol-zeta4 is the fully active form of DNA polymerase zeta. Requires [4Fe-4S] cluster as cofactor.

Its subcellular location is the nucleus. It catalyses the reaction DNA(n) + a 2'-deoxyribonucleoside 5'-triphosphate = DNA(n+1) + diphosphate. Its function is as follows. Catalytic subunit of the DNA polymerase zeta complex, an error-prone polymerase specialized in translesion DNA synthesis (TLS). Lacks an intrinsic 3'-5' exonuclease activity and thus has no proofreading function. The chain is DNA polymerase zeta catalytic subunit (Rev3l) from Mus musculus (Mouse).